The sequence spans 114 residues: DNA-binding protein rrnAC3180 (114 aa).

Over residues 1-11 (MSGDPSEEELE) the composition is skewed to acidic residues. The segment at 1 to 45 (MSGDPSEEELEELRKKKMEQLKEQQGGEGEGQEAAQQQAEAQKQA) is disordered. A compositionally biased stretch (basic and acidic residues) spans 12–22 (ELRKKKMEQLK). The span at 32-45 (QEAAQQQAEAQKQA) shows a compositional bias: low complexity.

It belongs to the PDCD5 family.

The chain is DNA-binding protein rrnAC3180 from Haloarcula marismortui (strain ATCC 43049 / DSM 3752 / JCM 8966 / VKM B-1809) (Halobacterium marismortui).